Consider the following 137-residue polypeptide: Small ribosomal subunit protein uS12 (137 aa).

At aspartate 102 the chain carries 3-methylthioaspartic acid.

This sequence belongs to the universal ribosomal protein uS12 family. Part of the 30S ribosomal subunit. Contacts proteins S8 and S17. May interact with IF1 in the 30S initiation complex.

In terms of biological role, with S4 and S5 plays an important role in translational accuracy. Functionally, interacts with and stabilizes bases of the 16S rRNA that are involved in tRNA selection in the A site and with the mRNA backbone. Located at the interface of the 30S and 50S subunits, it traverses the body of the 30S subunit contacting proteins on the other side and probably holding the rRNA structure together. The combined cluster of proteins S8, S12 and S17 appears to hold together the shoulder and platform of the 30S subunit. The chain is Small ribosomal subunit protein uS12 from Phytoplasma mali (strain AT).